A 1501-amino-acid chain; its full sequence is LDQSSRYADLSLDEDTLIRNGKHVLVAYIMKPKAGYDYLATAAHFAAESSTGTNVNVCTTDDFTKSVDALVYYIDPDNEEMKIAYPTLLFDRNITDGRGMMCSFLTLAIGNNQGMGDVEYGKIYDFYLPPAFLRLYDGPSVNVEDMWRILGRGTTNGGLVVGTIIKPKLGLQPKPFGEACYSFWQGGDFIKNDEPQGNQVFCQMNECIPEVVKAMRACVKETGSSKLFSANITADDPEEMIARGKYIMSQFGPLSENCAFLVDGYVAGGTAVTCCRRNFPKQFLHYHRAGHGSVTSPQTQRGYTAFVHTKISRVIGASGIHVGTMSFGKMEGDASDKNIAYMLQDDEADGPYYRQEWQGMKETTPIISGGMNALRLPAFFENLGHSNVILTAGGGSFGHKDGPKIGAISCRQGEEAWKQWKAGQFGNISLSDGVIEYAKTHEEIKGAFLTFQKDADQIYPGWKEKLGYTGESSVQAASFDWAKRASAAAFVGASVAPAKKENVVARQALDQSSRYADLSLDEDTLIRNGKHVLVAYIMKPKAGYDYLATAAHFAAESSTGTNVNVCTTDDFTKSVDALVYYIDPDNEEMKIAYPTLLFDRNITDGRGMMCSFLTLAIGNNQGMGDVEYGKIYDFYLPPAFLRLYDGPSVNVEDMWRILGRGTTNGGLVVGTIIKPKLGLQPKPFGEACYSFWQGGDFIKNDEPQGNQVFCQMNECIPEVVKAMRACVKETGSSKLFSANITADDPEEMIARGKYIMSQFGPLSENCAFLVDGYVAGGTAVTCCRRNFPKQFLHYHRAGHGSVTSPQTQRGYTAFVHTKISRVIGASGIHVGTMSFGKMEGDASDKNIAYMLQDDEADGPYYRQEWQGMKETTPIISGGMNALRLPAFFENLGHSNVILTAGGGSFGHKDGPKIGAISCRQGEEAWKQWKAGQFGNISLSDGVIEYAKTHEEIKGAFLTFQKDADQIYPGWKEKLGYTGESSVQAASFDWAKRASAAAFVGASVAPAKKENVVARQALDQSSRYADLSLDEDTLIRNGKHVLVAYIMKPKAGYDYLATAAHFAAESSTGTNVNVCTTDDFTKSVDALVYYIDPDNEEMKIAYPTLLFDRNITDGRGMMCSFLTLAIGNNQGMGDVEYGKIYDFYLPPAFLRLYDGPSVNVEDMWRILGRGTTNGGLVVGTIIKPKLGLQPKPFGEACYSFWQGGDFIKNDEPQGNQVFCQMNECIPEVVKAMRACVKETGSSKLFSANITADDPEEMIARGKYIMSQFGPLSENCAFLVDGYVAGGTAVTCCRRNFPKQFLHYHRAGHGSVTSPQTQRGYTAFVHTKISRVIGASGIHVGTMSFGKMEGDASDKNIAYMLQDDEADGPYYRQEWQGMKETTPIISGGMNALRLPAFFENLGHSKVILTAGGGSFGHKDGPKIGAISCRQGEEAWKQWKAGQFGNISLSDGVIEYAKTHEEIKGAFLTFQKDADQIYPGWKEKLGYTGESSVQAASFDWAKRA.

N111 is a binding site for substrate. The active-site Proton acceptor is K166. K168 serves as a coordination point for substrate. K191, D193, and E194 together coordinate Mg(2+). The residue at position 191 (K191) is an N6-carboxylysine. H287 functions as the Proton acceptor in the catalytic mechanism. Residues R288, H321, and S368 each contribute to the substrate site. A propeptide spans S486–A508 (linker). N619 provides a ligand contact to substrate. The active-site Proton acceptor is K674. Substrate is bound at residue K676. Residues K699, D701, and E702 each coordinate Mg(2+). K699 is subject to N6-carboxylysine. The Proton acceptor role is filled by H795. Substrate-binding residues include R796, H829, and S876. A propeptide spans S994–A1016 (linker). N1127 contacts substrate. The active-site Proton acceptor is K1182. Residue K1184 coordinates substrate. 3 residues coordinate Mg(2+): K1207, D1209, and E1210. K1207 carries the post-translational modification N6-carboxylysine. H1303 acts as the Proton acceptor in catalysis. R1304, H1337, and S1384 together coordinate substrate.

It belongs to the RuBisCO large chain family. Type II subfamily. As to quaternary structure, homodimer. Mg(2+) is required as a cofactor.

The protein resides in the plastid. Its subcellular location is the chloroplast. The enzyme catalyses 2 (2R)-3-phosphoglycerate + 2 H(+) = D-ribulose 1,5-bisphosphate + CO2 + H2O. It catalyses the reaction D-ribulose 1,5-bisphosphate + O2 = 2-phosphoglycolate + (2R)-3-phosphoglycerate + 2 H(+). Functionally, ruBisCO catalyzes two reactions: the carboxylation of D-ribulose 1,5-bisphosphate, the primary event in carbon dioxide fixation, as well as the oxidative fragmentation of the pentose substrate. Both reactions occur simultaneously and in competition at the same active site. The protein is Ribulose bisphosphate carboxylase (rbcL) of Symbiodinium sp. (Dinoflagellate).